A 196-amino-acid polypeptide reads, in one-letter code: MTTILRIDSSIKGEAAVSRRLTQRILDRLLEAHPDATVVSRDLAQGIRQIDGPWLGSVFTAPEQRTADQQEIARTADAVMAEVKEADILVIALPVYNFGAPAQLKSWVDHIARRGESFVYTETGPVGLLTGKRAIVAFTSDGTPLGSELDHASGWLRQVLGFVGITDVDFVAADRMVFGADEAMARAEAAVAALAA.

S10 contributes to the FMN binding site.

Belongs to the azoreductase type 1 family. Homodimer. It depends on FMN as a cofactor.

It catalyses the reaction 2 a quinone + NADH + H(+) = 2 a 1,4-benzosemiquinone + NAD(+). It carries out the reaction N,N-dimethyl-1,4-phenylenediamine + anthranilate + 2 NAD(+) = 2-(4-dimethylaminophenyl)diazenylbenzoate + 2 NADH + 2 H(+). Its function is as follows. Quinone reductase that provides resistance to thiol-specific stress caused by electrophilic quinones. Functionally, also exhibits azoreductase activity. Catalyzes the reductive cleavage of the azo bond in aromatic azo compounds to the corresponding amines. In Cereibacter sphaeroides (strain ATCC 17029 / ATH 2.4.9) (Rhodobacter sphaeroides), this protein is FMN-dependent NADH:quinone oxidoreductase.